The sequence spans 376 residues: tRNA-specific 2-thiouridylase MnmA (376 aa).

ATP-binding positions include 16–23 and Leu-42; that span reads AMSGGVDS. Residue Cys-111 is the Nucleophile of the active site. A disulfide bridge links Cys-111 with Cys-210. Gly-135 provides a ligand contact to ATP. The interval 158–160 is interaction with tRNA; that stretch reads KDQ. Cys-210 functions as the Cysteine persulfide intermediate in the catalytic mechanism.

The protein belongs to the MnmA/TRMU family.

It is found in the cytoplasm. It carries out the reaction S-sulfanyl-L-cysteinyl-[protein] + uridine(34) in tRNA + AH2 + ATP = 2-thiouridine(34) in tRNA + L-cysteinyl-[protein] + A + AMP + diphosphate + H(+). Catalyzes the 2-thiolation of uridine at the wobble position (U34) of tRNA, leading to the formation of s(2)U34. This Streptomyces coelicolor (strain ATCC BAA-471 / A3(2) / M145) protein is tRNA-specific 2-thiouridylase MnmA.